Here is a 74-residue protein sequence, read N- to C-terminus: Toxin BmKaTx17 (74 aa).

The first 8 residues, 1–8, serve as a signal peptide directing secretion; sequence LLMTGVES. The LCN-type CS-alpha/beta domain occupies 10–72; sequence RDAYIAKNYN…KPIRIPGKCH (63 aa). Intrachain disulfides connect cysteine 20–cysteine 71, cysteine 24–cysteine 44, cysteine 30–cysteine 54, and cysteine 34–cysteine 56. Positions 73–74 are cleaved as a propeptide — removed by a carboxypeptidase; sequence RR.

This sequence belongs to the long (4 C-C) scorpion toxin superfamily. Sodium channel inhibitor family. Alpha subfamily. In terms of tissue distribution, expressed by the venom gland.

It is found in the secreted. In terms of biological role, alpha toxins bind voltage-independently at site-3 of sodium channels (Nav) and inhibit the inactivation of the activated channels, thereby blocking neuronal transmission. The chain is Toxin BmKaTx17 from Olivierus martensii (Manchurian scorpion).